The following is a 160-amino-acid chain: Small ribosomal subunit protein bS6 (160 aa).

This sequence belongs to the bacterial ribosomal protein bS6 family.

In terms of biological role, binds together with bS18 to 16S ribosomal RNA. This is Small ribosomal subunit protein bS6 from Ureaplasma parvum serovar 3 (strain ATCC 27815 / 27 / NCTC 11736).